The chain runs to 191 residues: Protein GrpE (191 aa).

Positions methionine 1–alanine 10 are enriched in basic and acidic residues. The segment at methionine 1–valine 28 is disordered.

This sequence belongs to the GrpE family. Homodimer.

It localises to the cytoplasm. In terms of biological role, participates actively in the response to hyperosmotic and heat shock by preventing the aggregation of stress-denatured proteins, in association with DnaK and GrpE. It is the nucleotide exchange factor for DnaK and may function as a thermosensor. Unfolded proteins bind initially to DnaJ; upon interaction with the DnaJ-bound protein, DnaK hydrolyzes its bound ATP, resulting in the formation of a stable complex. GrpE releases ADP from DnaK; ATP binding to DnaK triggers the release of the substrate protein, thus completing the reaction cycle. Several rounds of ATP-dependent interactions between DnaJ, DnaK and GrpE are required for fully efficient folding. The sequence is that of Protein GrpE from Aeromonas hydrophila subsp. hydrophila (strain ATCC 7966 / DSM 30187 / BCRC 13018 / CCUG 14551 / JCM 1027 / KCTC 2358 / NCIMB 9240 / NCTC 8049).